Consider the following 35-residue polypeptide: Conotoxin Ca15a (35 aa).

4-hydroxyproline is present on proline 8.

Post-translationally, contains 4 disulfide bonds. Expressed by the venom duct.

It localises to the secreted. The sequence is that of Conotoxin Ca15a from Conus caracteristicus (Characteristic cone).